The following is a 560-amino-acid chain: Putative transport protein VV1438 (560 aa).

Helical transmembrane passes span 5–25, 37–57, 66–86, 91–111, and 164–184; these read VVLL…AIGL, LGNS…GFSF, FMLF…GIFF, HYFT…YFAS, and VGYA…AKLL. RCK C-terminal domains are found at residues 203–292 and 293–376; these read RGLG…FRNG and KEVF…RIGF. 6 helical membrane passes run 386–406, 409–429, 443–463, 478–498, 506–526, and 539–559; these read LLAF…TMTF, VSFS…LGFL, ALNM…GLSA, IIGI…LVGA, ALLF…DIVN, and AGTY…LIIL.

This sequence belongs to the AAE transporter (TC 2.A.81) family. YbjL subfamily.

The protein resides in the cell membrane. The polypeptide is Putative transport protein VV1438 (Vibrio vulnificus (strain YJ016)).